A 144-amino-acid polypeptide reads, in one-letter code: Large ribosomal subunit protein uL24 (144 aa).

A disordered region spans residues 1–22 (MKFNKMVSSDRGKNRKRHFNAP). The segment covering 13 to 22 (KNRKRHFNAP) has biased composition (basic residues).

It belongs to the universal ribosomal protein uL24 family.

The polypeptide is Large ribosomal subunit protein uL24 (RPL26) (Littorina littorea (Common periwinkle)).